The sequence spans 338 residues: LIX1-like protein (338 aa).

The segment at 1–65 (METMRAQRLQ…LLLAGAPGLP (65 aa)) is disordered. Residues 29–38 (TGAPTSAATP) show a composition bias toward low complexity. A compositionally biased stretch (pro residues) spans 39–56 (PAGPPPAPPPPAPPPPPL).

Belongs to the LIX1 family.

The chain is LIX1-like protein (Lix1l) from Rattus norvegicus (Rat).